The chain runs to 215 residues: Deoxyribose-phosphate aldolase (215 aa).

D90 serves as the catalytic Proton donor/acceptor. The active-site Schiff-base intermediate with acetaldehyde is K152. K181 (proton donor/acceptor) is an active-site residue.

It belongs to the DeoC/FbaB aldolase family. DeoC type 1 subfamily.

It localises to the cytoplasm. It catalyses the reaction 2-deoxy-D-ribose 5-phosphate = D-glyceraldehyde 3-phosphate + acetaldehyde. It functions in the pathway carbohydrate degradation; 2-deoxy-D-ribose 1-phosphate degradation; D-glyceraldehyde 3-phosphate and acetaldehyde from 2-deoxy-alpha-D-ribose 1-phosphate: step 2/2. In terms of biological role, catalyzes a reversible aldol reaction between acetaldehyde and D-glyceraldehyde 3-phosphate to generate 2-deoxy-D-ribose 5-phosphate. In Ureaplasma parvum serovar 3 (strain ATCC 27815 / 27 / NCTC 11736), this protein is Deoxyribose-phosphate aldolase.